An 821-amino-acid polypeptide reads, in one-letter code: Xylosyltransferase 1 (821 aa).

Residues 1-121 (YFSHRPKEKV…PETKSDQVPK (121 aa)) are disordered. Residues 1 to 821 (YFSHRPKEKV…GAVKPDGRLR (821 aa)) are Lumenal-facing. Residues 9 to 25 (KVRTDSNNENSVPKDFE) are compositionally biased toward basic and acidic residues. Residues 27–36 (VDNSNFAPRT) are compositionally biased toward polar residues. 2 stretches are compositionally biased toward basic and acidic residues: residues 41–58 (HQPE…ERLQ) and 76–87 (GPKEVLPPREKA). An N-linked (GlcNAc...) asparagine glycan is attached at Asn90. Intrachain disulfides connect Cys122–Cys150, Cys166–Cys407, Cys426–Cys439, and Cys428–Cys437. UDP-alpha-D-xylose contacts are provided by residues Val198, Asp226, and 255–257 (TIW). An N-linked (GlcNAc...) asparagine glycan is attached at Asn286. 359–360 (DW) is a UDP-alpha-D-xylose binding site. Residues Ser440 and 463 to 464 (RK) each bind UDP-alpha-D-xylose. 2 cysteine pairs are disulfide-bonded: Cys540-Cys789 and Cys782-Cys795. N-linked (GlcNAc...) asparagine glycosylation is present at Asn642. Residues 801-821 (SSFSPDPKSELGAVKPDGRLR) form a disordered region.

It belongs to the glycosyltransferase 14 family. XylT subfamily. In terms of assembly, monomer. It depends on a divalent metal cation as a cofactor. Contains 7 disulfide bonds. Post-translationally, N-glycosylated.

Its subcellular location is the golgi apparatus membrane. The catalysed reaction is UDP-alpha-D-xylose + L-seryl-[protein] = 3-O-(beta-D-xylosyl)-L-seryl-[protein] + UDP + H(+). It functions in the pathway glycan metabolism; chondroitin sulfate biosynthesis. It participates in glycan metabolism; heparan sulfate biosynthesis. In terms of biological role, catalyzes the first step in the biosynthesis of chondroitin sulfate and dermatan sulfate proteoglycans, such as DCN. Transfers D-xylose from UDP-D-xylose to specific serine residues of the core protein. Required for normal maturation of chondrocytes during bone development, normal onset of ossification and normal embryonic and postnatal skeleton development, especially of the long bones. The protein is Xylosyltransferase 1 (Xylt1) of Rattus norvegicus (Rat).